Here is a 248-residue protein sequence, read N- to C-terminus: MNKLQSYFIASVLYVMTPHAFAQGTVTIYLPGEQQTLSVGPVENVVQLVTQPQLRDRLWWPGALLTDSAAKAKALKDYQHVMAQLASWEAEADDDVAATIKSVRQQLLNLNITGRLPVKLDPDFVRVDENSNPPLVGDYTLYTVQRPVTITLLGAVSGAGQLPWQAGRSVTDYLQDHPRLAGADKNNVMVITPEGETVVAPVALWNKRHVEPPPGSQLWLGFSAHVLPEKYADLNDQIVSVLTQRVPD.

Positions 1–22 are cleaved as a signal peptide; the sequence is MNKLQSYFIASVLYVMTPHAFA.

It to E.coli YjbG.

This is an uncharacterized protein from Escherichia coli (strain K12).